The chain runs to 361 residues: UDP-3-O-acylglucosamine N-acyltransferase (361 aa).

H253 functions as the Proton acceptor in the catalytic mechanism.

This sequence belongs to the transferase hexapeptide repeat family. LpxD subfamily. Homotrimer.

The enzyme catalyses a UDP-3-O-[(3R)-3-hydroxyacyl]-alpha-D-glucosamine + a (3R)-hydroxyacyl-[ACP] = a UDP-2-N,3-O-bis[(3R)-3-hydroxyacyl]-alpha-D-glucosamine + holo-[ACP] + H(+). The protein operates within bacterial outer membrane biogenesis; LPS lipid A biosynthesis. In terms of biological role, catalyzes the N-acylation of UDP-3-O-acylglucosamine using 3-hydroxyacyl-ACP as the acyl donor. Is involved in the biosynthesis of lipid A, a phosphorylated glycolipid that anchors the lipopolysaccharide to the outer membrane of the cell. The polypeptide is UDP-3-O-acylglucosamine N-acyltransferase (Burkholderia pseudomallei (strain 668)).